Here is a 325-residue protein sequence, read N- to C-terminus: 7,8-didemethyl-8-hydroxy-5-deazariboflavin synthase (325 aa).

The Radical SAM core domain maps to 1–241; sequence MTYSKNVFVP…SDIAVQVAPN (241 aa). 3 residues coordinate [4Fe-4S] cluster: Cys15, Cys19, and Cys22.

Belongs to the radical SAM superfamily. CofG family. Consists of two subunits, CofG and CofH. The cofactor is [4Fe-4S] cluster.

The catalysed reaction is 5-amino-5-(4-hydroxybenzyl)-6-(D-ribitylimino)-5,6-dihydrouracil + S-adenosyl-L-methionine = 7,8-didemethyl-8-hydroxy-5-deazariboflavin + 5'-deoxyadenosine + L-methionine + NH4(+) + H(+). Its pathway is cofactor biosynthesis; coenzyme F0 biosynthesis. In terms of biological role, catalyzes the radical-mediated synthesis of 7,8-didemethyl-8-hydroxy-5-deazariboflavin from 5-amino-5-(4-hydroxybenzyl)-6-(D-ribitylimino)-5,6-dihydrouracil. In Methanosarcina barkeri (strain Fusaro / DSM 804), this protein is 7,8-didemethyl-8-hydroxy-5-deazariboflavin synthase.